A 304-amino-acid chain; its full sequence is UDP-N-acetylenolpyruvoylglucosamine reductase (304 aa).

The 166-residue stretch at 33–198 (RVGGPADILV…IEATVELESG (166 aa)) folds into the FAD-binding PCMH-type domain. Residue R177 is part of the active site. Catalysis depends on S227, which acts as the Proton donor. Residue E297 is part of the active site.

This sequence belongs to the MurB family. The cofactor is FAD.

Its subcellular location is the cytoplasm. It catalyses the reaction UDP-N-acetyl-alpha-D-muramate + NADP(+) = UDP-N-acetyl-3-O-(1-carboxyvinyl)-alpha-D-glucosamine + NADPH + H(+). It participates in cell wall biogenesis; peptidoglycan biosynthesis. In terms of biological role, cell wall formation. In Clostridium perfringens (strain ATCC 13124 / DSM 756 / JCM 1290 / NCIMB 6125 / NCTC 8237 / Type A), this protein is UDP-N-acetylenolpyruvoylglucosamine reductase.